The following is a 252-amino-acid chain: MHAEFRTDRGRIRHHNEDNGGVFENKDNQPIVIVADGMGGHRAGDVASEMAVRLLSDAWKETTALLTAEEIETWLQKTIQEVNKEIVLYSESEMDLNGMGTTLVAAIMAQSQVVIANVGDSRGYLLQNHVLRQLTEDHSLVHELLRTGEISKEDAMNHPRKNILLRALGVEGKVEVDTFVVPFQTSDTLLLCSDGLTNMVPETEMEEILKSKRTLSEKADVFITKANSYGGEDNITVLLVERDLTQKGRDAS.

A compositionally biased stretch (basic and acidic residues) spans 1–18 (MHAEFRTDRGRIRHHNED). The tract at residues 1-23 (MHAEFRTDRGRIRHHNEDNGGVF) is disordered. Residues 2-242 (HAEFRTDRGR…DNITVLLVER (241 aa)) enclose the PPM-type phosphatase domain. 4 residues coordinate Mn(2+): Asp36, Gly37, Asp194, and Asp233.

Belongs to the PP2C family. Mn(2+) is required as a cofactor.

The protein resides in the cytoplasm. It is found in the membrane. The catalysed reaction is O-phospho-L-seryl-[protein] + H2O = L-seryl-[protein] + phosphate. The enzyme catalyses O-phospho-L-threonyl-[protein] + H2O = L-threonyl-[protein] + phosphate. Its function is as follows. Protein phosphatase that dephosphorylates EF-Tu. The polypeptide is Serine/threonine phosphatase stp (stp) (Listeria monocytogenes serotype 4b (strain F2365)).